The following is a 428-amino-acid chain: Adenylosuccinate synthetase (428 aa).

GTP is bound by residues 12-18 (GDEGKGK) and 40-42 (GHT). Asp-13 acts as the Proton acceptor in catalysis. Mg(2+) is bound by residues Asp-13 and Gly-40. Residues 13–16 (DEGK), 38–41 (NAGH), Thr-128, Arg-142, Gln-222, Thr-237, and Arg-301 each bind IMP. The active-site Proton donor is the His-41. 297–303 (VNTGRAR) lines the substrate pocket. Residues Arg-303, 329–331 (KLD), and 411–413 (STS) each bind GTP.

It belongs to the adenylosuccinate synthetase family. Homodimer. It depends on Mg(2+) as a cofactor.

The protein resides in the cytoplasm. It catalyses the reaction IMP + L-aspartate + GTP = N(6)-(1,2-dicarboxyethyl)-AMP + GDP + phosphate + 2 H(+). It participates in purine metabolism; AMP biosynthesis via de novo pathway; AMP from IMP: step 1/2. In terms of biological role, plays an important role in the de novo pathway of purine nucleotide biosynthesis. Catalyzes the first committed step in the biosynthesis of AMP from IMP. This Caulobacter vibrioides (strain ATCC 19089 / CIP 103742 / CB 15) (Caulobacter crescentus) protein is Adenylosuccinate synthetase.